Here is a 601-residue protein sequence, read N- to C-terminus: Methionine--tRNA ligase (601 aa).

The short motif at 21–31 is the 'HIGH' region element; the sequence is PYANGPRHIGH. Zn(2+) is bound by residues Cys-153, Cys-156, Cys-166, and Cys-169. Residue Asn-361 participates in ATP binding.

Belongs to the class-I aminoacyl-tRNA synthetase family. MetG type 1 subfamily. As to quaternary structure, monomer. The cofactor is Zn(2+).

Its subcellular location is the cytoplasm. It carries out the reaction tRNA(Met) + L-methionine + ATP = L-methionyl-tRNA(Met) + AMP + diphosphate. Its function is as follows. Is required not only for elongation of protein synthesis but also for the initiation of all mRNA translation through initiator tRNA(fMet) aminoacylation. This chain is Methionine--tRNA ligase, found in Cutibacterium acnes (strain DSM 16379 / KPA171202) (Propionibacterium acnes).